We begin with the raw amino-acid sequence, 182 residues long: Ribulose bisphosphate carboxylase small subunit, chloroplastic (182 aa).

The N-terminal 58 residues, 1-58 (MACSMISSATVAAVSRASPAQSSMVAPFTCLKSTSAFPVTQKTNNDITSIASNGGRVQ), are a transit peptide targeting the chloroplast.

This sequence belongs to the RuBisCO small chain family. Heterohexadecamer of 8 large and 8 small subunits.

It is found in the plastid. The protein resides in the chloroplast. Functionally, ruBisCO catalyzes two reactions: the carboxylation of D-ribulose 1,5-bisphosphate, the primary event in carbon dioxide fixation, as well as the oxidative fragmentation of the pentose substrate. Both reactions occur simultaneously and in competition at the same active site. Although the small subunit is not catalytic it is essential for maximal activity. The polypeptide is Ribulose bisphosphate carboxylase small subunit, chloroplastic (Betula pendula (European white birch)).